We begin with the raw amino-acid sequence, 466 residues long: Asparagine--tRNA ligase (466 aa).

Belongs to the class-II aminoacyl-tRNA synthetase family. As to quaternary structure, homodimer.

The protein resides in the cytoplasm. The catalysed reaction is tRNA(Asn) + L-asparagine + ATP = L-asparaginyl-tRNA(Asn) + AMP + diphosphate + H(+). The chain is Asparagine--tRNA ligase from Serratia proteamaculans (strain 568).